The following is a 191-amino-acid chain: Pentapeptide repeat protein MfpA (191 aa).

The Pentapeptide repeat domain maps to 115–154 (CRLREVSLVGADLRKAVLRRADLTGSRVQDARLEEADLRG).

This sequence belongs to the pentapeptide repeat protein family. Homodimer. Probably interacts with DNA gyrase.

When present on multicopy plasmids confers increased resistance to fluoroquinolone antibiotics such as ciprofloxacin and sparfloxacin but not the quinolone nalidixic acid. Forms a structure that exhibits size, shape and electrostatic similarity to B-form DNA; it may bind to DNA gyrase which is postulated to protect it from fluoroquinolones. The polypeptide is Pentapeptide repeat protein MfpA (Mycolicibacterium smegmatis (strain ATCC 700084 / mc(2)155) (Mycobacterium smegmatis)).